A 227-amino-acid chain; its full sequence is Cytidylate kinase (227 aa).

12 to 20 contributes to the ATP binding site; it reads GPSGSGKGT.

Belongs to the cytidylate kinase family. Type 1 subfamily.

The protein resides in the cytoplasm. The enzyme catalyses CMP + ATP = CDP + ADP. It carries out the reaction dCMP + ATP = dCDP + ADP. In Nitrosococcus oceani (strain ATCC 19707 / BCRC 17464 / JCM 30415 / NCIMB 11848 / C-107), this protein is Cytidylate kinase.